Here is an 806-residue protein sequence, read N- to C-terminus: Volume-regulated anion channel subunit LRRC8E (806 aa).

The Cytoplasmic segment spans residues 1–22; it reads MIPVAEFKQFTEQQPAFKVLKP. A helical transmembrane segment spans residues 23–43; that stretch reads WWDVLAEYITYAMLMIGVFGC. Topologically, residues 44-130 are extracellular; it reads TLQVTQDKII…YETALHWYAK (87 aa). A disulfide bridge connects residues cysteine 54 and cysteine 311. Asparagine 57 and asparagine 80 each carry an N-linked (GlcNAc...) asparagine glycan. A disordered region spans residues 75–104; the sequence is QSSASNDSDLETTVPPPTATSSPPREMSGL. The chain crosses the membrane as a helical span at residues 131-151; it reads YFPYLVVIHTLIFIICGNFWF. At 152–275 the chain is on the cytoplasmic side; sequence KFPGTSSKIE…MRQTVLKVCK (124 aa). Residues 182–217 are disordered; the sequence is EVSGESSQEKPNQERSIDRELSKPNFEEGSPATADL. The span at 188–207 shows a compositional bias: basic and acidic residues; that stretch reads SQEKPNQERSIDRELSKPNF. A helical membrane pass occupies residues 276-296; that stretch reads FVLITIYNAVLVGKIHFIVPC. The Extracellular portion of the chain corresponds to 297–323; it reads SVHTEDMTGYNSFCCNHTKAHLFSKLA. Asparagine 312 is a glycosylation site (N-linked (GlcNAc...) asparagine). The chain crosses the membrane as a helical span at residues 324–344; the sequence is ISYLCFLGVYGLTCFYTLYWL. Topologically, residues 345-806 are cytoplasmic; the sequence is FRRPLKEYSF…VDVRDKFKED (462 aa). LRR repeat units lie at residues 569–589, 593–614, 616–637, 641–662, 664–685, 687–708, 710–731, 733–754, and 756–777; these read HLQK…NALK, LVKE…VFSL, NLQV…ISLQ, KLSV…IRKL, GLEE…LFLC, KLRH…IGVL, LLQY…LFFC, KLKT…VGSL, and CLVK…IGNC.

It belongs to the LRRC8 family. As to quaternary structure, heterohexamer; oligomerizes with other LRRC8 proteins (lrrc8a, lrrc8c, lrrc8d and/or lrrc8b) to form a heterohexamer. Detected in a channel complex that contains lrrc8a, lrrc8c and lrrc8e. In vivo, the subunit composition may depend primarily on expression levels, and heterooligomeric channels containing various proportions of the different LRRC8 proteins may coexist.

It localises to the cell membrane. It is found in the endoplasmic reticulum membrane. The protein localises to the lysosome membrane. It catalyses the reaction chloride(in) = chloride(out). It carries out the reaction iodide(out) = iodide(in). The catalysed reaction is taurine(out) = taurine(in). The enzyme catalyses 2',3'-cGAMP(out) = 2',3'-cGAMP(in). Non-essential component of the volume-regulated anion channel (VRAC, also named VSOAC channel), an anion channel required to maintain a constant cell volume in response to extracellular or intracellular osmotic changes. The VRAC channel conducts iodide better than chloride and can also conduct organic osmolytes like taurine. Mediates efflux of amino acids, such as aspartate, in response to osmotic stress. The VRAC channel also mediates transport of immunoreactive cyclic dinucleotide GMP-AMP (2'-3'-cGAMP), an immune messenger produced in response to DNA virus in the cytosol. Channel activity requires lrrc8a plus at least one other family member (lrrc8b, lrrc8c, lrrc8d or lrrc8e); channel characteristics depend on the precise subunit composition. Also plays a role in lysosome homeostasis by forming functional lysosomal VRAC channels in response to low cytoplasmic ionic strength condition: lysosomal VRAC channels are necessary for the formation of large lysosome-derived vacuoles, which store and then expel excess water to maintain cytosolic water homeostasis. This chain is Volume-regulated anion channel subunit LRRC8E, found in Xenopus laevis (African clawed frog).